Here is a 129-residue protein sequence, read N- to C-terminus: Glycine cleavage system H protein (129 aa).

The 83-residue stretch at 24-106 folds into the Lipoyl-binding domain; sequence TFTVGISEHA…YGDGWLFRIK (83 aa). An N6-lipoyllysine modification is found at K65.

Belongs to the GcvH family. The glycine cleavage system is composed of four proteins: P, T, L and H. Requires (R)-lipoate as cofactor.

The glycine cleavage system catalyzes the degradation of glycine. The H protein shuttles the methylamine group of glycine from the P protein to the T protein. This chain is Glycine cleavage system H protein, found in Idiomarina loihiensis (strain ATCC BAA-735 / DSM 15497 / L2-TR).